The chain runs to 215 residues: Ribonuclease T (215 aa).

One can recognise an Exonuclease domain in the interval 20–194; that stretch reads VVIDVETAGF…YDTERTAVLF (175 aa). Positions 23, 25, 181, and 186 each coordinate Mg(2+). Catalysis depends on His-181, which acts as the Proton donor/acceptor.

It belongs to the RNase T family. In terms of assembly, homodimer. The cofactor is Mg(2+).

Trims short 3' overhangs of a variety of RNA species, leaving a one or two nucleotide 3' overhang. Responsible for the end-turnover of tRNA: specifically removes the terminal AMP residue from uncharged tRNA (tRNA-C-C-A). Also appears to be involved in tRNA biosynthesis, especially in strains lacking other exoribonucleases. Functionally, a general regulator of small RNAs (sRNA), contributes to their degradation. Upon overexpression suppresses sRNA-mediated RhyB-silencing of multiple RNA targets; overexpression leads to nearly complete loss of RhyB sRNA. The chain is Ribonuclease T from Escherichia coli (strain K12).